The primary structure comprises 500 residues: Lysine--tRNA ligase (500 aa).

2 residues coordinate Mg(2+): Glu-406 and Glu-413.

The protein belongs to the class-II aminoacyl-tRNA synthetase family. Homodimer. Mg(2+) is required as a cofactor.

Its subcellular location is the cytoplasm. The catalysed reaction is tRNA(Lys) + L-lysine + ATP = L-lysyl-tRNA(Lys) + AMP + diphosphate. This is Lysine--tRNA ligase from Sulfolobus acidocaldarius (strain ATCC 33909 / DSM 639 / JCM 8929 / NBRC 15157 / NCIMB 11770).